The sequence spans 186 residues: Acireductone dioxygenase (186 aa).

The Fe(2+) site is built by histidine 96, histidine 98, glutamate 102, and histidine 140. Residues histidine 96, histidine 98, glutamate 102, and histidine 140 each contribute to the Ni(2+) site.

The protein belongs to the acireductone dioxygenase (ARD) family. In terms of assembly, monomer. The cofactor is Fe(2+). Ni(2+) is required as a cofactor.

It catalyses the reaction 1,2-dihydroxy-5-(methylsulfanyl)pent-1-en-3-one + O2 = 3-(methylsulfanyl)propanoate + CO + formate + 2 H(+). It carries out the reaction 1,2-dihydroxy-5-(methylsulfanyl)pent-1-en-3-one + O2 = 4-methylsulfanyl-2-oxobutanoate + formate + 2 H(+). The protein operates within amino-acid biosynthesis; L-methionine biosynthesis via salvage pathway; L-methionine from S-methyl-5-thio-alpha-D-ribose 1-phosphate: step 5/6. Its function is as follows. Catalyzes 2 different reactions between oxygen and the acireductone 1,2-dihydroxy-3-keto-5-methylthiopentene (DHK-MTPene) depending upon the metal bound in the active site. Fe-containing acireductone dioxygenase (Fe-ARD) produces formate and 2-keto-4-methylthiobutyrate (KMTB), the alpha-ketoacid precursor of methionine in the methionine recycle pathway. Ni-containing acireductone dioxygenase (Ni-ARD) produces methylthiopropionate, carbon monoxide and formate, and does not lie on the methionine recycle pathway. The polypeptide is Acireductone dioxygenase (Methylococcus capsulatus (strain ATCC 33009 / NCIMB 11132 / Bath)).